The sequence spans 124 residues: Phosphoribosyl-AMP cyclohydrolase (124 aa).

Position 82 (aspartate 82) interacts with Mg(2+). Cysteine 83 serves as a coordination point for Zn(2+). Mg(2+)-binding residues include aspartate 84 and aspartate 86. Zn(2+) is bound by residues cysteine 99 and cysteine 106.

The protein belongs to the PRA-CH family. Homodimer. The cofactor is Mg(2+). Zn(2+) is required as a cofactor.

Its subcellular location is the cytoplasm. It carries out the reaction 1-(5-phospho-beta-D-ribosyl)-5'-AMP + H2O = 1-(5-phospho-beta-D-ribosyl)-5-[(5-phospho-beta-D-ribosylamino)methylideneamino]imidazole-4-carboxamide. It participates in amino-acid biosynthesis; L-histidine biosynthesis; L-histidine from 5-phospho-alpha-D-ribose 1-diphosphate: step 3/9. Its function is as follows. Catalyzes the hydrolysis of the adenine ring of phosphoribosyl-AMP. The sequence is that of Phosphoribosyl-AMP cyclohydrolase from Rhizorhabdus wittichii (strain DSM 6014 / CCUG 31198 / JCM 15750 / NBRC 105917 / EY 4224 / RW1) (Sphingomonas wittichii).